We begin with the raw amino-acid sequence, 180 residues long: Putative adenylate kinase (180 aa).

Gly-10, Gly-12, Lys-13, Thr-14, and Thr-15 together coordinate ATP. Positions 30-50 (SVKELALSRGIGERVSDEIEI) are NMP. The LID stretch occupies residues 99-109 (ARGYSKKKLAE). Positions 100 and 138 each coordinate ATP.

It belongs to the adenylate kinase family. AK6 subfamily. As to quaternary structure, interacts with uS11. Not a structural component of 40S pre-ribosomes, but transiently interacts with them by binding to uS11.

The enzyme catalyses AMP + ATP = 2 ADP. It catalyses the reaction ATP + H2O = ADP + phosphate + H(+). Its function is as follows. Broad-specificity nucleoside monophosphate (NMP) kinase that catalyzes the reversible transfer of the terminal phosphate group between nucleoside triphosphates and monophosphates. Also has ATPase activity. Involved in the late maturation steps of the 30S ribosomal particles, specifically 16S rRNA maturation. While NMP activity is not required for ribosome maturation, ATPase activity is. Associates transiently with small ribosomal subunit protein uS11. ATP hydrolysis breaks the interaction with uS11. May temporarily remove uS11 from the ribosome to enable a conformational change of the ribosomal RNA that is needed for the final maturation step of the small ribosomal subunit. The polypeptide is Putative adenylate kinase (Thermococcus onnurineus (strain NA1)).